Here is a 75-residue protein sequence, read N- to C-terminus: Conotoxin Vc6.15 (75 aa).

The first 19 residues, Met1–Ala19, serve as a signal peptide directing secretion. The propeptide occupies Leu20 to Glu41. 3 disulfides stabilise this stretch: Cys49–Cys62, Cys55–Cys66, and Cys61–Cys71.

The protein belongs to the conotoxin O2 superfamily. Expressed by the venom duct.

The protein localises to the secreted. In terms of biological role, inhibits voltage-gated ion channels. The sequence is that of Conotoxin Vc6.15 from Conus victoriae (Queen Victoria cone).